Reading from the N-terminus, the 365-residue chain is Carbohydrate sulfotransferase 10 (365 aa).

The Cytoplasmic segment spans residues 1–6 (MRRHWL). Residues 7–27 (LVGACGWVLLILMFVSKFINF) form a helical; Signal-anchor for type II membrane protein membrane-spanning segment. Over 28–356 (SFRIPGDYAG…RYQGDFSLFD (329 aa)) the chain is Lumenal. 2 N-linked (GlcNAc...) asparagine glycosylation sites follow: asparagine 99 and asparagine 104. Residues 132–138 (PKVGNTQ) and 194–202 (RDPFERLIS) each bind 3'-phosphoadenylyl sulfate. N-linked (GlcNAc...) asparagine glycosylation occurs at asparagine 325.

It belongs to the sulfotransferase 2 family.

The protein localises to the golgi apparatus membrane. Its function is as follows. Catalyzes the transfer of sulfate to position 3 of terminal glucuronic acid of both protein- and lipid-linked oligosaccharides. Participates in biosynthesis of HNK-1 carbohydrate structure, a sulfated glucuronyl-lactosaminyl residue carried by many neural recognition molecules. The sequence is that of Carbohydrate sulfotransferase 10 (chst10) from Danio rerio (Zebrafish).